Consider the following 266-residue polypeptide: RNA-binding protein 7 (266 aa).

The residue at position 2 (Gly-2) is an N-acetylglycine. Positions 10 to 87 (RTLFVGNLET…RPIKIQFRSG (78 aa)) constitute an RRM domain. 2 ZCCHC8 binding regions span residues 25-35 (LLFELFHQAGP) and 59-76 (HEVS…IKLY). Residues 90–115 (HAPQDVSLSYPQHHVGNSSPTSTSPS) are compositionally biased toward polar residues. A disordered region spans residues 90–118 (HAPQDVSLSYPQHHVGNSSPTSTSPSRYE). A phosphoserine mark is found at Ser-136 and Ser-137. Arg-152 is subject to Omega-N-methylarginine. The segment at 162-266 (SSPLDQSGFS…RDGKWRSSRH (105 aa)) is disordered. Over residues 173-188 (SVQSHSHSFNQSSSSQ) the composition is skewed to low complexity. Residue Ser-204 is modified to Phosphoserine. Residues 209 to 266 (ADRHYSREQRYTDHGSDHHYRGKRDDFFYEDRNHDDWSHDYDNRRDSSRDGKWRSSRH) are compositionally biased toward basic and acidic residues.

As to quaternary structure, component of the nuclear exosome targeting (NEXT) complex composed of MTREX, ZCCHC8, and RBM7 that directs a subset of non-coding short-lived RNAs for exosomal degradation. Interacts with ZCCHC8 and SF3B2/SAP145. Binds to MTREX through ZCCHC8. Interacts with YWHAE and YWHAZ; these interactions are stress-dependent and RBM7 phosphorylation dependent; release RNA from the NEXT complex and may affect RNA targeting to the nuclear RNA exosomome for degradation. Interacts with MEPCE and LARP7, the core subunits of 7SK snRNP; upon genotoxic stress this interaction is enhanced, triggering the release of inactive P-TEFb complex from the core and P-TEFb complex activation. Phosphorylated at Ser-136 by MAPK14/p38-alpha-activated MAPKAPK2/MK2; this phosphorylation is stress-dependent; this phosphorylation decreases its RNA-binding capacity therefore affecting RNA nuclear exosome-mediated degradation. This phosphorylation mediates YWHAE and YWHAZ interactions. As to expression, ubiquitous.

Its subcellular location is the nucleus. The protein resides in the nucleoplasm. Its function is as follows. RNA-binding subunit of the trimeric nuclear exosome targeting (NEXT) complex, a complex that functions as an RNA exosome cofactor that directs a subset of non-coding short-lived RNAs for exosomal degradation. NEXT is involved in surveillance and turnover of aberrant transcripts and non-coding RNAs. Binds preferentially polyuridine sequences and associates with newly synthesized RNAs, including pre-mRNAs and short-lived exosome substrates such as promoter upstream transcripts (PROMPTs), enhancer RNAs (eRNAs), and 3'-extended products from small nuclear RNAs (snRNAs). Participates in several biological processes including DNA damage response (DDR) and stress response. During stress response, activation of the p38MAPK-MK2 pathway decreases RBM7-RNA-binding and subsequently the RNA exosome degradation activities, thereby modulating the turnover of non-coding transcriptome. Participates in DNA damage response (DDR), through its interaction with MEPCE and LARP7, the core subunits of 7SK snRNP complex, that release the positive transcription elongation factor b (P-TEFb) complex from the 7SK snRNP. In turn, activation of P-TEFb complex induces the transcription of P-TEFb-dependent DDR genes to promote cell viability. The chain is RNA-binding protein 7 from Homo sapiens (Human).